Consider the following 393-residue polypeptide: NAD(P)H-quinone oxidoreductase subunit H, chloroplastic (393 aa).

The protein belongs to the complex I 49 kDa subunit family. As to quaternary structure, NDH is composed of at least 16 different subunits, 5 of which are encoded in the nucleus.

The protein localises to the plastid. The protein resides in the chloroplast thylakoid membrane. It catalyses the reaction a plastoquinone + NADH + (n+1) H(+)(in) = a plastoquinol + NAD(+) + n H(+)(out). It carries out the reaction a plastoquinone + NADPH + (n+1) H(+)(in) = a plastoquinol + NADP(+) + n H(+)(out). Functionally, NDH shuttles electrons from NAD(P)H:plastoquinone, via FMN and iron-sulfur (Fe-S) centers, to quinones in the photosynthetic chain and possibly in a chloroplast respiratory chain. The immediate electron acceptor for the enzyme in this species is believed to be plastoquinone. Couples the redox reaction to proton translocation, and thus conserves the redox energy in a proton gradient. The chain is NAD(P)H-quinone oxidoreductase subunit H, chloroplastic from Oenothera biennis (German evening primrose).